The primary structure comprises 169 residues: MAVLQVLHIPDERLRKVAEPVKEVNAEIQRIVDDMFDTMYAEEGIGLAATQVDIHQRIIVIDVSENREEQLVLINPEMLEKDGETGIEEGCLSIPEQRALVPRAEKVKIRALDRDGKPFELEADGLLAICIQHEMDHLVGKLFIDYLSPLKQQRIRQKVEKLDRLRSRA.

Fe cation is bound by residues C91 and H133. The active site involves E134. Fe cation is bound at residue H137.

Belongs to the polypeptide deformylase family. It depends on Fe(2+) as a cofactor.

The enzyme catalyses N-terminal N-formyl-L-methionyl-[peptide] + H2O = N-terminal L-methionyl-[peptide] + formate. In terms of biological role, removes the formyl group from the N-terminal Met of newly synthesized proteins. Requires at least a dipeptide for an efficient rate of reaction. N-terminal L-methionine is a prerequisite for activity but the enzyme has broad specificity at other positions. This chain is Peptide deformylase, found in Klebsiella pneumoniae subsp. pneumoniae (strain ATCC 700721 / MGH 78578).